A 94-amino-acid chain; its full sequence is Small ribosomal subunit protein bS20 (94 aa).

The segment covering 1 to 10 has biased composition (basic and acidic residues); the sequence is MANHASADKR. Residues 1–20 are disordered; that stretch reads MANHASADKRNRQRITRTAR. Residues 11-20 are compositionally biased toward basic residues; sequence NRQRITRTAR.

This sequence belongs to the bacterial ribosomal protein bS20 family.

Its function is as follows. Binds directly to 16S ribosomal RNA. The chain is Small ribosomal subunit protein bS20 from Sorangium cellulosum (strain So ce56) (Polyangium cellulosum (strain So ce56)).